A 217-amino-acid polypeptide reads, in one-letter code: Adenylate kinase (217 aa).

10–15 serves as a coordination point for ATP; sequence GAGKGT. The interval 30-59 is NMP; that stretch reads STGDMLRAQIKAGTELGMKAKAIMDAGGLV. Residues Thr31, Arg36, 57-59, 85-88, and Gln92 contribute to the AMP site; these read GLV and GFPR. The LID stretch occupies residues 122–159; it reads GRRVHVASGRTYHVVFNPPKVAGKDDVTGEDLIQRDDD. ATP is bound by residues Arg123 and 132 to 133; that span reads TY. Positions 156 and 167 each coordinate AMP. An ATP-binding site is contributed by Gly203.

It belongs to the adenylate kinase family. Monomer.

It is found in the cytoplasm. The catalysed reaction is AMP + ATP = 2 ADP. It functions in the pathway purine metabolism; AMP biosynthesis via salvage pathway; AMP from ADP: step 1/1. Functionally, catalyzes the reversible transfer of the terminal phosphate group between ATP and AMP. Plays an important role in cellular energy homeostasis and in adenine nucleotide metabolism. This chain is Adenylate kinase, found in Thiobacillus denitrificans (strain ATCC 25259 / T1).